Here is an 821-residue protein sequence, read N- to C-terminus: Leucine--tRNA ligase (821 aa).

The short motif at 44-54 (PYPSGRIHMGH) is the 'HIGH' region element. Positions 589–593 (KMSKS) match the 'KMSKS' region motif. Lys592 contacts ATP.

This sequence belongs to the class-I aminoacyl-tRNA synthetase family.

It localises to the cytoplasm. It catalyses the reaction tRNA(Leu) + L-leucine + ATP = L-leucyl-tRNA(Leu) + AMP + diphosphate. The protein is Leucine--tRNA ligase of Campylobacter concisus (strain 13826).